A 266-amino-acid chain; its full sequence is Glucosamine-6-phosphate deaminase (266 aa).

Catalysis depends on Asp-72, which acts as the Proton acceptor; for enolization step. Catalysis depends on Asp-141, which acts as the For ring-opening step. The active-site Proton acceptor; for ring-opening step is the His-143. Glu-148 acts as the For ring-opening step in catalysis.

This sequence belongs to the glucosamine/galactosamine-6-phosphate isomerase family. NagB subfamily. In terms of assembly, homohexamer.

It catalyses the reaction alpha-D-glucosamine 6-phosphate + H2O = beta-D-fructose 6-phosphate + NH4(+). It participates in amino-sugar metabolism; N-acetylneuraminate degradation; D-fructose 6-phosphate from N-acetylneuraminate: step 5/5. With respect to regulation, allosterically activated by N-acetylglucosamine 6-phosphate (GlcNAc6P). In terms of biological role, catalyzes the reversible isomerization-deamination of glucosamine 6-phosphate (GlcN6P) to form fructose 6-phosphate (Fru6P) and ammonium ion. In Enterobacter sp. (strain 638), this protein is Glucosamine-6-phosphate deaminase.